Consider the following 251-residue polypeptide: MQFPVDTHSHTVASTHAYSTIHDYLAVAKEKGIRLFATTDHGPAMKDAPHFWHFVNLRVLPRIWNGVGILRGIEANIMNEKGEIDYFGEYLSELDLVQAGFHEPVFAPADRLTHTRAMIATMESGLVDIITHPGNPAYPIDVEAVVGAAKACNVALEINNSSFTASRKGSEENCLAIARMATKLDAQLVMGSDAHVAFDLGGFDRSLAIVDAADYPRQRLLNESPMALLHFLQQRGHQHLDELIRYFRPVL.

Residues His8, His10, His16, His41, Glu74, His102, His132, Asp193, and His195 each contribute to the Zn(2+) site.

The protein belongs to the PHP family. Zn(2+) serves as cofactor.

The polypeptide is Probable phosphatase Sama_2233 (Shewanella amazonensis (strain ATCC BAA-1098 / SB2B)).